A 95-amino-acid polypeptide reads, in one-letter code: Aspartyl/glutamyl-tRNA(Asn/Gln) amidotransferase subunit C (95 aa).

Belongs to the GatC family. In terms of assembly, heterotrimer of A, B and C subunits.

The catalysed reaction is L-glutamyl-tRNA(Gln) + L-glutamine + ATP + H2O = L-glutaminyl-tRNA(Gln) + L-glutamate + ADP + phosphate + H(+). The enzyme catalyses L-aspartyl-tRNA(Asn) + L-glutamine + ATP + H2O = L-asparaginyl-tRNA(Asn) + L-glutamate + ADP + phosphate + 2 H(+). In terms of biological role, allows the formation of correctly charged Asn-tRNA(Asn) or Gln-tRNA(Gln) through the transamidation of misacylated Asp-tRNA(Asn) or Glu-tRNA(Gln) in organisms which lack either or both of asparaginyl-tRNA or glutaminyl-tRNA synthetases. The reaction takes place in the presence of glutamine and ATP through an activated phospho-Asp-tRNA(Asn) or phospho-Glu-tRNA(Gln). This Methylorubrum populi (strain ATCC BAA-705 / NCIMB 13946 / BJ001) (Methylobacterium populi) protein is Aspartyl/glutamyl-tRNA(Asn/Gln) amidotransferase subunit C.